Consider the following 101-residue polypeptide: MKPNFSKGLLPAVVIEEDTKEVLMLAYMNEEAYEKTIETKRTWFYSRSRRSLWNKGETSGNVQHVQSLYLDCDQDSIVVVVKQVGPACHTGEKTCFHYKII.

Mg(2+) is bound at residue aspartate 71. Residue cysteine 72 coordinates Zn(2+). The Mg(2+) site is built by aspartate 73 and aspartate 75. Zn(2+)-binding residues include cysteine 88 and cysteine 95.

The protein belongs to the PRA-CH family. Homodimer. Mg(2+) serves as cofactor. The cofactor is Zn(2+).

It localises to the cytoplasm. The enzyme catalyses 1-(5-phospho-beta-D-ribosyl)-5'-AMP + H2O = 1-(5-phospho-beta-D-ribosyl)-5-[(5-phospho-beta-D-ribosylamino)methylideneamino]imidazole-4-carboxamide. Its pathway is amino-acid biosynthesis; L-histidine biosynthesis; L-histidine from 5-phospho-alpha-D-ribose 1-diphosphate: step 3/9. Functionally, catalyzes the hydrolysis of the adenine ring of phosphoribosyl-AMP. This chain is Phosphoribosyl-AMP cyclohydrolase, found in Bacillus cereus (strain ATCC 10987 / NRS 248).